Consider the following 679-residue polypeptide: Glycine--tRNA ligase beta subunit (679 aa).

Belongs to the class-II aminoacyl-tRNA synthetase family. In terms of assembly, tetramer of two alpha and two beta subunits.

Its subcellular location is the cytoplasm. It catalyses the reaction tRNA(Gly) + glycine + ATP = glycyl-tRNA(Gly) + AMP + diphosphate. This chain is Glycine--tRNA ligase beta subunit, found in Streptococcus pyogenes serotype M12 (strain MGAS9429).